The following is a 554-amino-acid chain: Germacrene A synthase (554 aa).

Residues Asp306, Asp310, Thr453, and Glu457 each coordinate Mg(2+). Positions 306–310 (DDTYD) match the DDXXD motif motif.

It belongs to the terpene synthase family. It depends on Mg(2+) as a cofactor.

It localises to the cytoplasm. The protein resides in the cytosol. It carries out the reaction (2E,6E)-farnesyl diphosphate = (+)-(R)-germacrene A + diphosphate. It participates in secondary metabolite biosynthesis; terpenoid biosynthesis. In terms of biological role, sesquiterpene synthase involved in germacrene A biosynthesis. Also produces additional sesquiterpene products, including 4,5-di-epi-aristolochene, eremophilene, alpha-selinene. This chain is Germacrene A synthase, found in Pogostemon cablin (Patchouli).